The primary structure comprises 382 residues: Succinate--CoA ligase [ADP-forming] subunit beta (382 aa).

Residues Lys-46, 53-55 (GRG), Val-95, and Glu-100 contribute to the ATP site. Mg(2+)-binding residues include Asn-192 and Asp-206. Substrate-binding positions include Asn-257 and 314-316 (GIT).

This sequence belongs to the succinate/malate CoA ligase beta subunit family. As to quaternary structure, heterotetramer of two alpha and two beta subunits. Mg(2+) serves as cofactor.

It catalyses the reaction succinate + ATP + CoA = succinyl-CoA + ADP + phosphate. It carries out the reaction GTP + succinate + CoA = succinyl-CoA + GDP + phosphate. The protein operates within carbohydrate metabolism; tricarboxylic acid cycle; succinate from succinyl-CoA (ligase route): step 1/1. In terms of biological role, succinyl-CoA synthetase functions in the citric acid cycle (TCA), coupling the hydrolysis of succinyl-CoA to the synthesis of either ATP or GTP and thus represents the only step of substrate-level phosphorylation in the TCA. The beta subunit provides nucleotide specificity of the enzyme and binds the substrate succinate, while the binding sites for coenzyme A and phosphate are found in the alpha subunit. This chain is Succinate--CoA ligase [ADP-forming] subunit beta, found in Bacteroides fragilis (strain ATCC 25285 / DSM 2151 / CCUG 4856 / JCM 11019 / LMG 10263 / NCTC 9343 / Onslow / VPI 2553 / EN-2).